Consider the following 174-residue polypeptide: MALLDLTVQMACSDRLPDLPWQDWLDRWLTDIQPQLPEDWQAPTYEACLRFVDDAEIQQLNRDYRQLDKPTDVLAFAALEDELALGFDPEEPLYLGDVIISVPTAQRQAQGHALETELVWLSAHGLLHLLGWDHPNEEQLAAMLTQQERWLQLVAVPVPPRWLDEVSQPPSSEP.

Zn(2+) is bound by residues His124, His128, and His134.

Belongs to the endoribonuclease YbeY family. Requires Zn(2+) as cofactor.

It is found in the cytoplasm. Its function is as follows. Single strand-specific metallo-endoribonuclease involved in late-stage 70S ribosome quality control and in maturation of the 3' terminus of the 16S rRNA. This chain is Endoribonuclease YbeY, found in Synechococcus elongatus (strain ATCC 33912 / PCC 7942 / FACHB-805) (Anacystis nidulans R2).